Reading from the N-terminus, the 316-residue chain is HPr kinase/phosphorylase (316 aa).

Residues His-143 and Lys-164 contribute to the active site. Residue 158-165 (GEAGSGKS) participates in ATP binding. Ser-165 contacts Mg(2+). Asp-182 (proton acceptor; for phosphorylation activity. Proton donor; for dephosphorylation activity) is an active-site residue. The segment at 206–215 (LEVRGLGVLN) is important for the catalytic mechanism of both phosphorylation and dephosphorylation. Position 207 (Glu-207) interacts with Mg(2+). Residue Arg-251 is part of the active site. The important for the catalytic mechanism of dephosphorylation stretch occupies residues 272–277 (PVMPGR).

This sequence belongs to the HPrK/P family. As to quaternary structure, homohexamer. Mg(2+) is required as a cofactor.

The enzyme catalyses [HPr protein]-L-serine + ATP = [HPr protein]-O-phospho-L-serine + ADP + H(+). It catalyses the reaction [HPr protein]-O-phospho-L-serine + phosphate + H(+) = [HPr protein]-L-serine + diphosphate. Catalyzes the ATP- as well as the pyrophosphate-dependent phosphorylation of a specific serine residue in HPr, a phosphocarrier protein of the phosphoenolpyruvate-dependent sugar phosphotransferase system (PTS). HprK/P also catalyzes the pyrophosphate-producing, inorganic phosphate-dependent dephosphorylation (phosphorolysis) of seryl-phosphorylated HPr (P-Ser-HPr). The protein is HPr kinase/phosphorylase of Xanthomonas euvesicatoria pv. vesicatoria (strain 85-10) (Xanthomonas campestris pv. vesicatoria).